A 136-amino-acid polypeptide reads, in one-letter code: Large ribosomal subunit protein uL16 (136 aa).

The protein belongs to the universal ribosomal protein uL16 family. As to quaternary structure, part of the 50S ribosomal subunit.

Its function is as follows. Binds 23S rRNA and is also seen to make contacts with the A and possibly P site tRNAs. The sequence is that of Large ribosomal subunit protein uL16 from Alteromonas mediterranea (strain DSM 17117 / CIP 110805 / LMG 28347 / Deep ecotype).